A 341-amino-acid chain; its full sequence is MAQRITLHDMTLRDGMHPKRHQISLEQMKGIARGLDAAGVPLIEVTHGDGLGGASVNYGFPAHSDEEYLRAVLGELKQARVSALLLPGIGTVDHLRMAHEIGVQTIRVATHCTEADVSEQHIGMARKLGMDTVGFLMMAHMAPVQTLVQQALLMESYGANCLYITDSAGHMLPHDVTEKLTAVRQALRPETELGFHGHHNLAMGVANSLAAITCGATRIDAAAAGLGAGAGNTPMEVLVAVCERMGIETGVDVFRIADVAEDLVVPIMDHPIRIDRDALTLGYAGVYSSFLLFAKRAEAKYRIPAREILVELGRQRLVGGQEDMIEDTAITLARARGLPVA.

The Pyruvate carboxyltransferase domain maps to 5–257 (ITLHDMTLRD…ETGVDVFRIA (253 aa)). Position 13 to 14 (13 to 14 (RD)) interacts with substrate. Asp14 provides a ligand contact to Mn(2+). His17 functions as the Proton acceptor in the catalytic mechanism. Substrate is bound by residues Ser167 and His196. Positions 196 and 198 each coordinate Mn(2+). Tyr287 contacts substrate.

This sequence belongs to the 4-hydroxy-2-oxovalerate aldolase family.

It catalyses the reaction (S)-4-hydroxy-2-oxopentanoate = acetaldehyde + pyruvate. This Cupriavidus taiwanensis (strain DSM 17343 / BCRC 17206 / CCUG 44338 / CIP 107171 / LMG 19424 / R1) (Ralstonia taiwanensis (strain LMG 19424)) protein is 4-hydroxy-2-oxovalerate aldolase (mhpE).